Here is a 270-residue protein sequence, read N- to C-terminus: Formamidopyrimidine-DNA glycosylase (270 aa).

Catalysis depends on Pro2, which acts as the Schiff-base intermediate with DNA. Glu3 serves as the catalytic Proton donor. The Proton donor; for beta-elimination activity role is filled by Lys58. DNA-binding residues include His91, Arg109, and Arg151. An FPG-type zinc finger spans residues 236–270 (LVYGRGGEACKTCQKPLKEIRMNDRTTVYCVTCQQ). The active-site Proton donor; for delta-elimination activity is Arg260.

The protein belongs to the FPG family. In terms of assembly, monomer. Requires Zn(2+) as cofactor.

The catalysed reaction is Hydrolysis of DNA containing ring-opened 7-methylguanine residues, releasing 2,6-diamino-4-hydroxy-5-(N-methyl)formamidopyrimidine.. It catalyses the reaction 2'-deoxyribonucleotide-(2'-deoxyribose 5'-phosphate)-2'-deoxyribonucleotide-DNA = a 3'-end 2'-deoxyribonucleotide-(2,3-dehydro-2,3-deoxyribose 5'-phosphate)-DNA + a 5'-end 5'-phospho-2'-deoxyribonucleoside-DNA + H(+). In terms of biological role, involved in base excision repair of DNA damaged by oxidation or by mutagenic agents. Acts as a DNA glycosylase that recognizes and removes damaged bases. Has a preference for oxidized purines, such as 7,8-dihydro-8-oxoguanine (8-oxoG). Has AP (apurinic/apyrimidinic) lyase activity and introduces nicks in the DNA strand. Cleaves the DNA backbone by beta-delta elimination to generate a single-strand break at the site of the removed base with both 3'- and 5'-phosphates. The protein is Formamidopyrimidine-DNA glycosylase of Cellvibrio japonicus (strain Ueda107) (Pseudomonas fluorescens subsp. cellulosa).